Reading from the N-terminus, the 712-residue chain is Testis-specific gene 10 protein (712 aa).

Serine 161 is modified (phosphoserine). The tract at residues 571-703 is interaction with HIF1A; the sequence is QMTNERISMQ…SPDRDLDRSL (133 aa). Residues 673–699 form a disordered region; sequence YHLGSMKPNTKCHSPERAHHRSPDRDL. Residues 685–699 show a composition bias toward basic and acidic residues; the sequence is HSPERAHHRSPDRDL. Serine 702 carries the phosphoserine modification.

It belongs to the CEP135/TSGA10 family. As to quaternary structure, interacts with HIF1A. Post-translationally, processed into N-terminal 27-kDa and C-terminal 55-kDa fragments. Expressed in testis, predominantly in elongated spermatids (at protein level). Detected in spermatocytes only at the mRNA, but not at the protein level.

It localises to the cytoplasm. It is found in the cytoskeleton. The protein resides in the microtubule organizing center. Its subcellular location is the centrosome. The protein localises to the centriole. Functionally, plays a role in spermatogenesis. When overexpressed, prevents nuclear localization of HIF1A. The chain is Testis-specific gene 10 protein (Tsga10) from Rattus norvegicus (Rat).